A 423-amino-acid polypeptide reads, in one-letter code: LysM domain-containing GPI-anchored protein 3 (423 aa).

The N-terminal stretch at 1 to 24 (MKNPEKPLLLFLILASSLASMATA) is a signal peptide. 4 disulfides stabilise this stretch: cysteine 31/cysteine 97, cysteine 37/cysteine 160, cysteine 95/cysteine 158, and cysteine 97/cysteine 160. The LysM 1 domain maps to 107 to 154 (THYKTRTSDTLGSIADSVYGGLVSPEQIQVANSETDLSVLDVGTKLVI). Asparagine 162 is a glycosylation site (N-linked (GlcNAc...) asparagine). The LysM 2 domain maps to 173–216 (LSYVVRGIDTMAGIAKRFSTSVTDLTNVNAMGAPDINPGDILAV). 2 disulfides stabilise this stretch: cysteine 221–cysteine 253 and cysteine 248–cysteine 276. N-linked (GlcNAc...) asparagine glycosylation occurs at asparagine 238. The N-linked (GlcNAc...) asparagine glycan is linked to asparagine 285. A lipid anchor (GPI-anchor amidated glycine) is attached at glycine 394. Positions 395–423 (GSISIASCPLSYYSFIALLIPIGSCFFVF) are cleaved as a propeptide — removed in mature form.

In terms of assembly, interacts with peptidoglycans.

It is found in the cell membrane. Functionally, required as a cell surface receptor for peptidoglycan (PGN) elicitor signaling leading to innate immunity. Plays an essential role in detecting PGNs and restricting bacterial growth (of Pseudomonas syringae pv. tomato DC3000 for example). The polypeptide is LysM domain-containing GPI-anchored protein 3 (LYM3) (Arabidopsis thaliana (Mouse-ear cress)).